The sequence spans 758 residues: Vitamin K-dependent gamma-carboxylase (758 aa).

The disordered stretch occupies residues 1–34 (MAVSARPARAPRGSDKVKKDKAAQTSGPRQGSRM). Residue Ala-2 is modified to N-acetylalanine. At 2-60 (AVSARPARAPRGSDKVKKDKAAQTSGPRQGSRMGKLLGFEWTDVSSWERLVTLLNRPTD) the chain is on the cytoplasmic side. Over residues 12–22 (RGSDKVKKDKA) the composition is skewed to basic and acidic residues. A helical membrane pass occupies residues 61-81 (PAGLAVFRFLFGLMMVLDIPQ). The Lumenal segment spans residues 82–113 (ERGLSSLDRRYLDGLEVCRFPLLDALQPLPLD). Cysteines 99 and 450 form a disulfide. The helical transmembrane segment at 114-134 (WMYLIYTIMFLGALGMMLGLC) threads the bilayer. At 135-136 (YR) the chain is on the cytoplasmic side. A helical membrane pass occupies residues 137-157 (ISCVLFLLPYWYVFLLDKTSW). The Lumenal segment spans residues 158-292 (NNHSYLYGLL…VSYFHCMNSQ (135 aa)). A helical membrane pass occupies residues 293–313 (LFSIGMFPYVMLASSPLFCSP). The Cytoplasmic segment spans residues 314–363 (EWPRKLVAHCPKKLQELLPLRTAPQPSTSCMYKRSRARGSQKPGLRHKLS). A helical membrane pass occupies residues 364–384 (TAFTLLYLLEQLFLPYSHFLT). The Lumenal portion of the chain corresponds to 385–758 (QGYNNWTNGL…PDSHPVHSEF (374 aa)). Residues 727–758 (PFEPAGEPSPVNTDSSNPNPPEPDSHPVHSEF) form a disordered region. The segment covering 749–758 (PDSHPVHSEF) has biased composition (basic and acidic residues).

As to quaternary structure, monomer. May interact with CALU. Post-translationally, the N-terminus is blocked.

The protein resides in the endoplasmic reticulum membrane. The enzyme catalyses 4-carboxy-L-glutamyl-[protein] + 2,3-epoxyphylloquinone + H2O + H(+) = phylloquinol + L-glutamyl-[protein] + CO2 + O2. Mediates the vitamin K-dependent carboxylation of glutamate residues to calcium-binding gamma-carboxyglutamate (Gla) residues with the concomitant conversion of the reduced hydroquinone form of vitamin K to vitamin K epoxide. Catalyzes gamma-carboxylation of various proteins, such as blood coagulation factors (F2, F7, F9 and F10), osteocalcin (BGLAP) or matrix Gla protein (MGP). The protein is Vitamin K-dependent gamma-carboxylase (GGCX) of Bos taurus (Bovine).